An 82-amino-acid chain; its full sequence is Sec-independent protein translocase protein TatA (82 aa).

A helical transmembrane segment spans residues 1–21; that stretch reads MGSLSIWHWLIVGAVVLLVFG. Positions 43–82 are disordered; that stretch reads GLSEDEEKAEAKPVGEPSLRSLDHQGAGDPLKTPDARKIG.

It belongs to the TatA/E family. In terms of assembly, the Tat system comprises two distinct complexes: a TatABC complex, containing multiple copies of TatA, TatB and TatC subunits, and a separate TatA complex, containing only TatA subunits. Substrates initially bind to the TatABC complex, which probably triggers association of the separate TatA complex to form the active translocon.

Its subcellular location is the cell inner membrane. Part of the twin-arginine translocation (Tat) system that transports large folded proteins containing a characteristic twin-arginine motif in their signal peptide across membranes. TatA could form the protein-conducting channel of the Tat system. This Methylocella silvestris (strain DSM 15510 / CIP 108128 / LMG 27833 / NCIMB 13906 / BL2) protein is Sec-independent protein translocase protein TatA.